Consider the following 410-residue polypeptide: MFGPVSVEMIIERVDEVRGKVKAPPSKSYTHRAYFLSLLADSPSKVMNPLISEDTIASLDAISKFGAQVNGNKIIPPQELTPGKIDARESGTTARISLAVASLARGTSVITGKGRLVERPFKPLVDALRSLKVKISGEKLPIAVEGGNPVGEYVKVDCSLSSQFGTAMLILASKIGLTVEMLNPVSRPYIEVTLKVMESFGIEFERNGFKVKVHPGIRGSKFHVPGDYSSASFFLAAGALYGKVKVSNLVKDDPQADARIIDILEEFGADVKVGRKYVVVERNEMKPINVDCSNFPDLFPILAVLASYAEGKSVITGRQLRLKESDRVKAVAVNLRKAGIKVKELPNGLEIVGGKPRGFTVESFNDHRIVMAMAILGLGAEGKTIIKDPHVVSKSYPSFFLDLRRVLNEG.

Residues K27, S28, and R32 each contribute to the 3-phosphoshikimate site. Phosphoenolpyruvate is bound at residue K27. Phosphoenolpyruvate is bound by residues G91 and R119. Residues S161, S162, Q163, D297, Q319, and K323 each coordinate 3-phosphoshikimate. Q163 is a binding site for phosphoenolpyruvate. D297 acts as the Proton acceptor in catalysis. The phosphoenolpyruvate site is built by R327, R368, and K394.

It belongs to the EPSP synthase family. Monomer.

Its subcellular location is the cytoplasm. The enzyme catalyses 3-phosphoshikimate + phosphoenolpyruvate = 5-O-(1-carboxyvinyl)-3-phosphoshikimate + phosphate. The protein operates within metabolic intermediate biosynthesis; chorismate biosynthesis. Its function is as follows. Catalyzes the transfer of the enolpyruvyl moiety of phosphoenolpyruvate (PEP) to the 5-hydroxyl of shikimate-3-phosphate (S3P) to produce enolpyruvyl shikimate-3-phosphate and inorganic phosphate. This chain is 3-phosphoshikimate 1-carboxyvinyltransferase, found in Pyrococcus abyssi (strain GE5 / Orsay).